An 802-amino-acid chain; its full sequence is Cullin-4 (802 aa).

Composition is skewed to low complexity over residues 1-33 and 656-676; these read MNFN…NNNN and STSS…ASGS. Disordered regions lie at residues 1 to 43 and 656 to 686; these read MNFN…SLAG and STSS…GGAT. The Cullin neddylation domain maps to 734–794; the sequence is DRQYQVDAAI…KEYLCRDPEN (61 aa). Lys-748 is covalently cross-linked (Glycyl lysine isopeptide (Lys-Gly) (interchain with G-Cter in NEDD8)).

It belongs to the cullin family. Post-translationally, neddylated. Deneddylated via its interaction with the COP9 signalosome (CSN) complex.

It functions in the pathway protein modification; protein ubiquitination. In terms of biological role, probable core component of cullin-based SCF-like E3 ubiquitin-protein ligase complexes which mediate the ubiquitination and subsequent proteasomal degradation of target proteins. The E3 ubiquitin-protein ligase activity of the complex is dependent on the neddylation of the cullin subunit. In Dictyostelium discoideum (Social amoeba), this protein is Cullin-4 (culD).